The chain runs to 479 residues: MRTDNIRNRKEQLKKQEKKDFDSSKDEETSTSDEEESSGGNRSKIAGKENHQNKNIINQKTNNNNNNNNIKEKDIIDSSVNNADNLKATDPPSAKYKKLAIRSVMGAFMIGFFTIVLSTDHFIVALFVIALQLLVFKEMIALRYIEAKEKKIPHFRTLNWFFLFTSFFFFYAKPILITLANYYPDIFQHFVRYHLWHSFSLYCIGFVLFILTLRKGVYRYQFSQLTWTLMILMMVVVQSNFLISNIYQGLIWFILPVSIIVCNDIFAYFNGFFLGKKFINRPLMKISPNKTWEGFIGATGWTLLFAYYFCGFLLKYDWIVCPKGNTGFMESLHCTRDPVFLEKEFIFPPEITTIAFKYLGITLLPFTYIPIQFHALVLALFGSLIAPFGGFFASGIKRAYKVKDFDTIFPGHGGVTDRTDCQFIMGLFIHVYYNTFIKTLEIDPTFIWQNIMMLSMEEKMVIYEKLKQSIEFTTGTITA.

Residues 1-28 (MRTDNIRNRKEQLKKQEKKDFDSSKDEE) show a composition bias toward basic and acidic residues. Residues 1–71 (MRTDNIRNRK…NNNNNNNNIK (71 aa)) form a disordered region. Topologically, residues 1 to 108 (MRTDNIRNRK…LAIRSVMGAF (108 aa)) are cytoplasmic. A compositionally biased stretch (low complexity) spans 53–69 (NKNIINQKTNNNNNNNN). The chain crosses the membrane as a helical span at residues 109-129 (MIGFFTIVLSTDHFIVALFVI). The Extracellular portion of the chain corresponds to 130–159 (ALQLLVFKEMIALRYIEAKEKKIPHFRTLN). A helical membrane pass occupies residues 160–180 (WFFLFTSFFFFYAKPILITLA). Over 181–192 (NYYPDIFQHFVR) the chain is Cytoplasmic. The chain crosses the membrane as a helical span at residues 193–213 (YHLWHSFSLYCIGFVLFILTL). Residues 214-240 (RKGVYRYQFSQLTWTLMILMMVVVQSN) are Extracellular-facing. A helical membrane pass occupies residues 241–261 (FLISNIYQGLIWFILPVSIIV). Topologically, residues 262 to 293 (CNDIFAYFNGFFLGKKFINRPLMKISPNKTWE) are cytoplasmic. The chain crosses the membrane as a helical span at residues 294-314 (GFIGATGWTLLFAYYFCGFLL). The Extracellular segment spans residues 315-375 (KYDWIVCPKG…FTYIPIQFHA (61 aa)). A helical transmembrane segment spans residues 376 to 396 (LVLALFGSLIAPFGGFFASGI). At 397-479 (KRAYKVKDFD…IEFTTGTITA (83 aa)) the chain is on the cytoplasmic side.

This sequence belongs to the CDS family.

The protein resides in the membrane. The catalysed reaction is a 1,2-diacyl-sn-glycero-3-phosphate + CTP + H(+) = a CDP-1,2-diacyl-sn-glycerol + diphosphate. It participates in phospholipid metabolism; CDP-diacylglycerol biosynthesis; CDP-diacylglycerol from sn-glycerol 3-phosphate: step 3/3. The sequence is that of Probable phosphatidate cytidylyltransferase (cdsA) from Dictyostelium discoideum (Social amoeba).